The sequence spans 307 residues: Follistatin-related protein 1 (307 aa).

Positions 1-19 are cleaved as a signal peptide; that stretch reads MMWRRWLALALVAVAWVHA. Residues 29-52 form the Follistatin-like domain; that stretch reads ICANVFCGAGRECAVTEKGEPTCL. Cystine bridges form between Cys30–Cys41, Cys35–Cys51, Cys53–Cys83, Cys57–Cys76, and Cys65–Cys97. Residues 47–99 form the Kazal-like domain; that stretch reads GEPTCLCIEQCKPHKRPVCGSNGKTYLNHCELHRDACLTGSKIQVDYDGHCKE. Asn143 carries N-linked (GlcNAc...) asparagine glycosylation. The EF-hand 1 domain occupies 143 to 177; that stretch reads NYSEILDKYFKNFDNGDSRLDSSEFLKFVEQNETA. Ser164 bears the Phosphoserine mark. 2 N-linked (GlcNAc...) asparagine glycosylation sites follow: Asn174 and Asn179. Residues 192–227 enclose the EF-hand 2 domain; the sequence is LRGLCVDALIELSDENADWKLSFQEFLKCLNPSFNP. Residues 232–286 form the VWFC domain; the sequence is CALEDETYADGAETEVDCNRCVCACGNWVCTAMTCDGKNQKGAQTQAEEEMTRYV.

As to quaternary structure, homodimer. Interacts with SCN10A. Interacts with DIP2A; DIP2A may act as a cell surface receptor for FSTL1. Interacts with BMP4. Interacts with CD14; this interaction promotes TL4-mediated signaling cascade.

The protein resides in the secreted. Its function is as follows. Secreted glycoprotein that is involved in various physiological processes, such as angiogenesis, regulation of the immune response, cell proliferation and differentiation. Plays a role in the development of the central nervous system, skeletal system, lungs, and ureter. Promotes endothelial cell survival, migration and differentiation into network structures in an AKT-dependent manner. Also promotes survival of cardiac myocytes. Initiates various signaling cascades by activating different receptors on the cell surface such as DIP2A, TLR4 or BMP receptors. The sequence is that of Follistatin-related protein 1 (FSTL1) from Bos taurus (Bovine).